The following is a 313-amino-acid chain: E3 ubiquitin-protein ligase SINA-like 2 (313 aa).

Positions 1–26 (MSGEASTSRRKRQRVPSSVESVENGG) are disordered. An RING-type zinc finger spans residues 44 to 80 (CPICCHALTSPIFQCDNGHIACSSCCTKLRNKCPSCA). The interval 94-277 (VVEAVMVTCP…LKMEICIRKL (184 aa)) is SBD. An SIAH-type zinc finger spans residues 97-155 (AVMVTCPNVKHGCTEKFSYGKELIHEKDCRFALCYCPAPNCNYSGVYKDLYSHFYVNHY). Cys-102, Cys-109, His-121, Cys-125, Cys-132, Cys-137, His-149, and His-154 together coordinate Zn(2+). Residues 278–313 (KKDEEEADEDEESEEEEDDDDDDDDDDEEEDADEEE) form a disordered region. The span at 282-313 (EEADEDEESEEEEDDDDDDDDDDEEEDADEEE) shows a compositional bias: acidic residues.

It belongs to the SINA (Seven in absentia) family.

The catalysed reaction is S-ubiquitinyl-[E2 ubiquitin-conjugating enzyme]-L-cysteine + [acceptor protein]-L-lysine = [E2 ubiquitin-conjugating enzyme]-L-cysteine + N(6)-ubiquitinyl-[acceptor protein]-L-lysine.. Its pathway is protein modification; protein ubiquitination. Its function is as follows. E3 ubiquitin-protein ligase that mediates ubiquitination and subsequent proteasomal degradation of target proteins. E3 ubiquitin ligases accept ubiquitin from an E2 ubiquitin-conjugating enzyme in the form of a thioester and then directly transfers the ubiquitin to targeted substrates. It probably triggers the ubiquitin-mediated degradation of different substrates. The protein is E3 ubiquitin-protein ligase SINA-like 2 of Arabidopsis thaliana (Mouse-ear cress).